Reading from the N-terminus, the 102-residue chain is RNA-binding protein Hfq (102 aa).

In terms of domain architecture, Sm spans 9–68; sequence DPFLNALRRERVPVSIYLVNGIKLQGQIESFDQFVILLKNTVSQMVYKHAISTVVPSRPV. The disordered stretch occupies residues 63 to 102; sequence VPSRPVSHHSNNAGGGTSSNYHHGSSPQNTSAQQDSEETE. Positions 70–96 are enriched in polar residues; it reads HHSNNAGGGTSSNYHHGSSPQNTSAQQ.

Belongs to the Hfq family. As to quaternary structure, homohexamer.

In terms of biological role, RNA chaperone that binds small regulatory RNA (sRNAs) and mRNAs to facilitate mRNA translational regulation in response to envelope stress, environmental stress and changes in metabolite concentrations. Also binds with high specificity to tRNAs. This Shigella dysenteriae serotype 1 (strain Sd197) protein is RNA-binding protein Hfq.